Here is a 122-residue protein sequence, read N- to C-terminus: NADH-quinone oxidoreductase subunit A (122 aa).

The next 3 membrane-spanning stretches (helical) occupy residues 10–30 (MIVG…LTLG), 66–86 (IFAL…PWAV), and 91–111 (LGLF…IGLA).

The protein belongs to the complex I subunit 3 family. NDH-1 is composed of 14 different subunits. Subunits NuoA, H, J, K, L, M, N constitute the membrane sector of the complex.

The protein localises to the cell membrane. The catalysed reaction is a quinone + NADH + 5 H(+)(in) = a quinol + NAD(+) + 4 H(+)(out). Its function is as follows. NDH-1 shuttles electrons from NADH, via FMN and iron-sulfur (Fe-S) centers, to quinones in the respiratory chain. The immediate electron acceptor for the enzyme in this species is believed to be a menaquinone. Couples the redox reaction to proton translocation (for every two electrons transferred, four hydrogen ions are translocated across the cytoplasmic membrane), and thus conserves the redox energy in a proton gradient. In Bacillus cytotoxicus (strain DSM 22905 / CIP 110041 / 391-98 / NVH 391-98), this protein is NADH-quinone oxidoreductase subunit A.